Reading from the N-terminus, the 151-residue chain is Deoxyuridine 5'-triphosphate nucleotidohydrolase (151 aa).

Substrate contacts are provided by residues 71–73 (RSG), Asn84, and 88–90 (TID).

The protein belongs to the dUTPase family. Requires Mg(2+) as cofactor.

It catalyses the reaction dUTP + H2O = dUMP + diphosphate + H(+). The protein operates within pyrimidine metabolism; dUMP biosynthesis; dUMP from dCTP (dUTP route): step 2/2. Functionally, this enzyme is involved in nucleotide metabolism: it produces dUMP, the immediate precursor of thymidine nucleotides and it decreases the intracellular concentration of dUTP so that uracil cannot be incorporated into DNA. This is Deoxyuridine 5'-triphosphate nucleotidohydrolase from Gluconobacter oxydans (strain 621H) (Gluconobacter suboxydans).